Reading from the N-terminus, the 147-residue chain is Mediator of RNA polymerase II transcription subunit 10 (147 aa).

It belongs to the Mediator complex subunit 10 family. In terms of assembly, component of the Mediator complex.

It is found in the nucleus. Functionally, component of the Mediator complex, a coactivator involved in the regulated transcription of nearly all RNA polymerase II-dependent genes. Mediator functions as a bridge to convey information from gene-specific regulatory proteins to the basal RNA polymerase II transcription machinery. Mediator is recruited to promoters by direct interactions with regulatory proteins and serves as a scaffold for the assembly of a functional preinitiation complex with RNA polymerase II and the general transcription factors. In Debaryomyces hansenii (strain ATCC 36239 / CBS 767 / BCRC 21394 / JCM 1990 / NBRC 0083 / IGC 2968) (Yeast), this protein is Mediator of RNA polymerase II transcription subunit 10 (NUT2).